We begin with the raw amino-acid sequence, 266 residues long: Glutamate racemase (266 aa).

Residues 7 to 8 and 39 to 40 contribute to the substrate site; these read DS and YG. Catalysis depends on C70, which acts as the Proton donor/acceptor. 71 to 72 contacts substrate; it reads NT. The active-site Proton donor/acceptor is the C186. 187–188 provides a ligand contact to substrate; sequence TH.

It belongs to the aspartate/glutamate racemases family.

The enzyme catalyses L-glutamate = D-glutamate. Its pathway is cell wall biogenesis; peptidoglycan biosynthesis. Its function is as follows. Provides the (R)-glutamate required for cell wall biosynthesis. This is Glutamate racemase from Campylobacter curvus (strain 525.92).